Here is a 386-residue protein sequence, read N- to C-terminus: Transcription factor GTE1 (386 aa).

2 disordered regions span residues 66 to 106 (GAAQ…KHVS) and 340 to 386 (ANKS…AKKA). Positions 68–78 (AQTNTSKSNSG) are enriched in polar residues. The 107-residue stretch at 105-211 (VSSPDLMRQF…EKFEEKWLLI (107 aa)) folds into the Bromo domain. The NET domain maps to 263 to 344 (RESVVQRCRK…EALKAANKSS (82 aa)). Over residues 345 to 358 (GGTNAQNNNNTGTG) the composition is skewed to low complexity.

In terms of tissue distribution, barely detectable in stems, leaves, siliques, and dry seeds, but was present at considerable levels in roots, flowers and imbibited seeds.

It localises to the nucleus. Transcription activator that plays a role in the promotion of seed germination by both negatively and positively regulating the abscisic acid (ABA) and phytochrome A (phyA) transduction pathways, respectively. This chain is Transcription factor GTE1 (GTE1), found in Arabidopsis thaliana (Mouse-ear cress).